A 122-amino-acid polypeptide reads, in one-letter code: Basic phospholipase A2 F15 (122 aa).

Intrachain disulfides connect cysteine 26/cysteine 115, cysteine 28/cysteine 44, cysteine 43/cysteine 95, cysteine 49/cysteine 122, cysteine 50/cysteine 88, cysteine 57/cysteine 81, and cysteine 75/cysteine 86. Ca(2+)-binding residues include tyrosine 27, glycine 29, and glycine 31. Histidine 47 is an active-site residue. Aspartate 48 serves as a coordination point for Ca(2+). The active site involves aspartate 89.

This sequence belongs to the phospholipase A2 family. Group II subfamily. D49 sub-subfamily. When this protein is associated with crotapotin (F5 or F7), it forms the crotoxin protein. Requires Ca(2+) as cofactor. Expressed by the venom gland.

Its subcellular location is the secreted. The catalysed reaction is a 1,2-diacyl-sn-glycero-3-phosphocholine + H2O = a 1-acyl-sn-glycero-3-phosphocholine + a fatty acid + H(+). Activated by heparin. Inhibited by its chaperone crotapotin. Snake venom phospholipase A2 (PLA2) that shows moderate neurotoxic activity in isolated mouse phrenic nerve diaphragm but shows high neurotoxic activity in a chick biventer cervis preparation. Also shows a high bactericidal effect against both Gram-negative and Gram-positive bacteria. PLA2 catalyzes the calcium-dependent hydrolysis of the 2-acyl groups in 3-sn-phosphoglycerides. The protein is Basic phospholipase A2 F15 of Crotalus durissus terrificus (South American rattlesnake).